Consider the following 277-residue polypeptide: Urease accessory protein UreD (277 aa).

This sequence belongs to the UreD family. UreD, UreF and UreG form a complex that acts as a GTP-hydrolysis-dependent molecular chaperone, activating the urease apoprotein by helping to assemble the nickel containing metallocenter of UreC. The UreE protein probably delivers the nickel.

It localises to the cytoplasm. Its function is as follows. Required for maturation of urease via the functional incorporation of the urease nickel metallocenter. This Pseudomonas entomophila (strain L48) protein is Urease accessory protein UreD.